The sequence spans 165 residues: Transcription antitermination protein NusB (165 aa).

This sequence belongs to the NusB family.

Functionally, involved in transcription antitermination. Required for transcription of ribosomal RNA (rRNA) genes. Binds specifically to the boxA antiterminator sequence of the ribosomal RNA (rrn) operons. This is Transcription antitermination protein NusB from Bradyrhizobium diazoefficiens (strain JCM 10833 / BCRC 13528 / IAM 13628 / NBRC 14792 / USDA 110).